Consider the following 542-residue polypeptide: MATNYIFVTGGVVSSLGKGIAAASLAALLEARGLNVTIMKLDPYINVDPGTMSPTQHGEVFVTQDGAETDLDLGHYERFIRTKMTKRNNFTTGKIYSEVLRKERRGDYLGATIQVIPHITNEIKARVIDGAAGYDVAIIEVGGTVGDIESLPFLEALRQLAVQVGRERTIFMHLTLVPYIPTAGEVKTKPTQHSVKELLSIGIQPDVLICRSDRMIPANERSKIALFCNVPEKAVISLKDVESIYQIPALLQSQGLDEFVCNRFHLEGKPADLSEWEQVLYRQANPTGEVTIGMVGKYVELPDAYKSVNEALKHAGLTNRLTVHIKYIDSQDVETKGTDVLKDLDGILVPGGFGYRGVEGKILTAQYARENNIPYLGICLGMQTALIEYARNVAGMKDANSSEFVKDCAYPVIGLITEWQDAEGNVEQRSENSDLGGTMRLGAQQCHLIEGSKARELYGKETIEERHRHRYEVNNTLLPQIEAAGLKVTGLSADRKLVEIIEVPNHPWFVACQFHPEFTSTPRDGHPLFAGFVKAAKENQKK.

Residues 1–266 form an amidoligase domain region; the sequence is MATNYIFVTG…DEFVCNRFHL (266 aa). Serine 14 contributes to the CTP binding site. Position 14 (serine 14) interacts with UTP. ATP is bound by residues 15–20 and aspartate 72; that span reads SLGKGI. Mg(2+) is bound by residues aspartate 72 and glutamate 140. Residues 147 to 149, 187 to 192, and lysine 223 each bind CTP; these read DIE and KTKPTQ. Residues 187-192 and lysine 223 each bind UTP; that span reads KTKPTQ. 239-241 provides a ligand contact to ATP; sequence KDV. Residues 291–542 enclose the Glutamine amidotransferase type-1 domain; that stretch reads TIGMVGKYVE…VKAAKENQKK (252 aa). Glycine 352 is a binding site for L-glutamine. Cysteine 379 serves as the catalytic Nucleophile; for glutamine hydrolysis. L-glutamine contacts are provided by residues 380–383, glutamate 403, and arginine 470; that span reads LGMQ. Active-site residues include histidine 515 and glutamate 517.

It belongs to the CTP synthase family. In terms of assembly, homotetramer.

It carries out the reaction UTP + L-glutamine + ATP + H2O = CTP + L-glutamate + ADP + phosphate + 2 H(+). The catalysed reaction is L-glutamine + H2O = L-glutamate + NH4(+). It catalyses the reaction UTP + NH4(+) + ATP = CTP + ADP + phosphate + 2 H(+). Its pathway is pyrimidine metabolism; CTP biosynthesis via de novo pathway; CTP from UDP: step 2/2. Its activity is regulated as follows. Allosterically activated by GTP, when glutamine is the substrate; GTP has no effect on the reaction when ammonia is the substrate. The allosteric effector GTP functions by stabilizing the protein conformation that binds the tetrahedral intermediate(s) formed during glutamine hydrolysis. Inhibited by the product CTP, via allosteric rather than competitive inhibition. Catalyzes the ATP-dependent amination of UTP to CTP with either L-glutamine or ammonia as the source of nitrogen. Regulates intracellular CTP levels through interactions with the four ribonucleotide triphosphates. The sequence is that of CTP synthase from Actinobacillus succinogenes (strain ATCC 55618 / DSM 22257 / CCUG 43843 / 130Z).